A 343-amino-acid polypeptide reads, in one-letter code: Hydroxycarboxylic acid receptor 1 (343 aa).

Over 1–21 the chain is Extracellular; that stretch reads MDNGSCCLIEGEPISQVMPPL. The N-linked (GlcNAc...) asparagine glycan is linked to N3. Residues 22–42 form a helical membrane-spanning segment; the sequence is LILVFVLGALGNGIALCGFCF. The Cytoplasmic segment spans residues 43-49; that stretch reads HMKTWKS. The chain crosses the membrane as a helical span at residues 50-70; sequence STIYLFNLAVADFLLMICLPL. The Extracellular portion of the chain corresponds to 71–90; it reads RTDYYLRRRHWIFGDIACRL. A disulfide bond links C88 and C165. The chain crosses the membrane as a helical span at residues 91 to 111; the sequence is VLFKLAMNRAGSIVFLTVVAV. Topologically, residues 112-131 are cytoplasmic; the sequence is DRYFKVVHPHHMVNAISNRT. The chain crosses the membrane as a helical span at residues 132-152; sequence AAATACVLWTLVILGTVYLLM. Topologically, residues 153 to 182 are extracellular; that stretch reads ESHLCVQGTLSSCESFIMESANGWHDVMFQ. A helical transmembrane segment spans residues 183 to 203; it reads LEFFLPLTIILFCSVNVVWSL. Topologically, residues 204 to 220 are cytoplasmic; sequence RRRQQLTRQARMRRATR. A helical transmembrane segment spans residues 221–241; the sequence is FIMVVASVFITCYLPSVLARL. The Extracellular portion of the chain corresponds to 242-259; the sequence is YFLWTVPTSACDPSVHTA. The chain crosses the membrane as a helical span at residues 260-280; sequence LHVTLSFTYLNSMLDPLVYYF. The Cytoplasmic portion of the chain corresponds to 281–343; the sequence is SSPSLPKFYT…SDGQWDLQVC (63 aa). Over residues 319–334 the composition is skewed to polar residues; sequence CSKSSIDGANRSQRPS. Residues 319-343 are disordered; sequence CSKSSIDGANRSQRPSDGQWDLQVC.

This sequence belongs to the G-protein coupled receptor 1 family. Highly expressed in subcutaneous fat and omental fat and detectable in lower levels in brain and many other tissues. High levels detected in epididymal and subcutaneous fat with slightly lower in omental fat, low levels are detected in the brain, skeletal muscle, kidney, liver and the pancreas (at protein level).

Its subcellular location is the cell membrane. Functionally, acts as a receptor for L-lactate and mediates its anti-lipolytic effect through a G(i)-protein-mediated pathway. This Mus musculus (Mouse) protein is Hydroxycarboxylic acid receptor 1 (Hcar1).